Consider the following 181-residue polypeptide: Adenylate kinase (181 aa).

10–15 provides a ligand contact to ATP; the sequence is GAGKGT. The tract at residues 30 to 59 is NMP; it reads STGELFRRNIEKDTKLGHEAKKYLDAGDLV. AMP is bound by residues T31, R36, 57-59, 85-88, and Q92; these read DLV and GYPR. An LID region spans residues 126–132; sequence GRGRADD. R127 serves as a coordination point for ATP. AMP contacts are provided by R129 and R140. G166 serves as a coordination point for ATP.

This sequence belongs to the adenylate kinase family. Monomer.

The protein resides in the cytoplasm. The catalysed reaction is AMP + ATP = 2 ADP. It functions in the pathway purine metabolism; AMP biosynthesis via salvage pathway; AMP from ADP: step 1/1. Functionally, catalyzes the reversible transfer of the terminal phosphate group between ATP and AMP. Plays an important role in cellular energy homeostasis and in adenine nucleotide metabolism. This chain is Adenylate kinase, found in Mycobacterium leprae (strain Br4923).